A 545-amino-acid chain; its full sequence is Purple acid phosphatase 13 (545 aa).

A signal peptide spans Met-1–Gly-25. Residues Asn-125 and Asn-145 are each glycosylated (N-linked (GlcNAc...) asparagine). Asp-203 lines the Fe cation pocket. An N-linked (GlcNAc...) asparagine glycan is attached at Asn-209. Position 233 (Tyr-233) interacts with Fe cation. Residues Asn-240, Asn-254, Asn-306, Asn-321, Asn-351, and Asn-367 are each glycosylated (N-linked (GlcNAc...) asparagine). His-389 serves as the catalytic Proton donor. His-416 lines the Zn(2+) pocket. Substrate is bound at residue His-416–Asp-418. N-linked (GlcNAc...) asparagine glycans are attached at residues Asn-428, Asn-466, Asn-475, and Asn-510.

It belongs to the metallophosphoesterase superfamily. Purple acid phosphatase family. In terms of assembly, homodimer. Requires Fe cation as cofactor. The cofactor is Zn(2+). As to expression, expressed in stems, leaves, flowers and siliques.

The protein localises to the secreted. It catalyses the reaction a phosphate monoester + H2O = an alcohol + phosphate. This is Purple acid phosphatase 13 (PAP13) from Arabidopsis thaliana (Mouse-ear cress).